A 159-amino-acid polypeptide reads, in one-letter code: Urease subunit beta 2 (159 aa).

The segment at 1–23 (MAKEPTEAAHPQPEQTKTNHKAH) is disordered.

It belongs to the urease beta subunit family. Heterotrimer of UreA (gamma), UreB (beta) and UreC (alpha) subunits. Three heterotrimers associate to form the active enzyme.

The protein resides in the cytoplasm. The enzyme catalyses urea + 2 H2O + H(+) = hydrogencarbonate + 2 NH4(+). The protein operates within nitrogen metabolism; urea degradation; CO(2) and NH(3) from urea (urease route): step 1/1. The chain is Urease subunit beta 2 from Brucella abortus biovar 1 (strain 9-941).